A 328-amino-acid polypeptide reads, in one-letter code: MLVSLLGILLSVIVGFVVTLISTKWVIGLCKKRGFTGKDINKLTKDDVPVLGGIGIVAGFVAGSFTFLLTSYNLSPGIENVVVSILLSSLIIGFLGLLDDIFNISQATRAFLPIFASIPLILYSVGHTIISIPFLGKVNFGILFYIIILPATLTITANAFNMLEGLNGLGAGMGLIMALALAYIGLKSGGTSFYAGIVSIILASVLFGFLIFNFYPAKTFPGNIGTYFIGSVIGSIGISGYMYTALFFLYLPYVIEFVLKAKTRFKGVSFGKIDDQGYLHWDSKPNSLTHIVMRIGKFKEYHIVLIIWGIEILFAILAVVFQTVTITI.

The next 9 membrane-spanning stretches (helical) occupy residues 1-21 (MLVS…VTLI), 48-68 (VPVL…FTFL), 78-98 (IENV…LGLL), 107-127 (ATRA…SVGH), 129-149 (IISI…IIIL), 166-186 (LNGL…YIGL), 192-212 (SFYA…FLIF), 228-248 (FIGS…ALFF), and 301-321 (YHIV…AVVF).

Belongs to the glycosyltransferase 4 family.

It localises to the cell membrane. The catalysed reaction is a di-trans,poly-cis-dolichyl phosphate + UDP-N-acetyl-alpha-D-glucosamine = an N-acetyl-alpha-D-glucosaminyl-diphospho-di-trans,poly-cis-dolichol + UMP. With respect to regulation, inhibited by tunicamycin. The protein is Putative UDP-N-acetylglucosamine--dolichyl-phosphate N-acetylglucosaminephosphotransferase (gnpTA) of Sulfolobus acidocaldarius (strain ATCC 33909 / DSM 639 / JCM 8929 / NBRC 15157 / NCIMB 11770).